Reading from the N-terminus, the 62-residue chain is MDMKKLIERINFLYKKSKEEGLTEEEKVEQQKLRREYIDIIKGNVKVQLEGVEKIPTANRKN.

Belongs to the UPF0291 family.

It localises to the cytoplasm. This is UPF0291 protein CLI_2672 from Clostridium botulinum (strain Langeland / NCTC 10281 / Type F).